We begin with the raw amino-acid sequence, 779 residues long: Protocadherin beta-8 (779 aa).

An N-terminal signal peptide occupies residues 1-28 (METALTKTPEKRQVIFLAILLLLWEASS). At 29 to 690 (EAISYSMPEE…QEEDMLTLYL (662 aa)) the chain is on the extracellular side. Cadherin domains lie at 75–133 (LQLD…FPEF), 134–242 (PDTE…APQF), 243–346 (LQSL…APKL), 347–450 (TISS…APAF), and 451–560 (TQTS…APFV). Residues Cys96 and Cys102 are joined by a disulfide bond. N-linked (GlcNAc...) asparagine glycosylation occurs at Asn169. Ser223 is a glycosylation site (O-linked (Man) serine). 2 O-linked (Man) threonine glycosylation sites follow: Thr225 and Thr227. Asn417 is a glycosylation site (N-linked (GlcNAc...) asparagine). N-linked (GlcNAc...) asparagine glycosylation is present at Asn566. In terms of domain architecture, Cadherin 6 spans 575-675 (LPRAAEPGYL…SQPYLPLPEV (101 aa)). Residues 691-711 (VIALASVSSLFLLSVLLFVGV) traverse the membrane as a helical segment. Over 712-779 (KLCKKAREAS…IIPSSLLQDS (68 aa)) the chain is Cytoplasmic.

Forms homodimers in trans (molecules expressed by two different cells). Forms promiscuous heterodimers in cis (at the plasma membrane of the same cell) with other protocadherins.

The protein resides in the cell membrane. Its function is as follows. Calcium-dependent cell-adhesion protein involved in cells self-recognition and non-self discrimination. Thereby, it is involved in the establishment and maintenance of specific neuronal connections in the brain. This is Protocadherin beta-8 from Mus musculus (Mouse).